The following is a 233-amino-acid chain: Histone H1-I (233 aa).

Disordered regions lie at residues 1–55 (MSDS…HPPV) and 115–233 (TGAS…KKSK). The span at 17–29 (KAATPAKSPAKSP) shows a compositional bias: low complexity. Residues 51–125 (THPPVSEMVV…GASGSFKMPP (75 aa)) form the H15 domain. Composition is skewed to basic and acidic residues over residues 128–137 (KKVDKPEAAP) and 144–155 (PKREIEKKEKKV). Composition is skewed to basic residues over residues 172-186 (AAKKAVAKPAAKKAA), 199-213 (SPKKAAAKPKAKPTP), and 223-233 (AAAKKPAKKSK).

Belongs to the histone H1/H5 family.

The protein localises to the nucleus. Its subcellular location is the chromosome. Functionally, histones H1 are necessary for the condensation of nucleosome chains into higher-order structures. This chain is Histone H1-I, found in Glyptotendipes salinus (Midge).